The chain runs to 151 residues: UPF0178 protein Sde_3033 (151 aa).

It belongs to the UPF0178 family.

The protein is UPF0178 protein Sde_3033 of Saccharophagus degradans (strain 2-40 / ATCC 43961 / DSM 17024).